The primary structure comprises 344 residues: MARPRHQPGGLCLLLLLLCQFMEDRSAQAGNCWLRQAKNGRCQVLYKTELSKEECCSTGRLSTSWTEEDVNDNTLFKWMIFNGGAPNCIPCKETCENVDCGPGKKCRMNKKNKPRCVCAPDCSNITWKGPVCGLDGKTYRNECALLKARCKEQPELQVQYQGKCKKTCRDVFCPGSSTCVVDQTNNAYCVTCNRICPEPTSSEQYLCGNDGVTYPSACHLRKATCLLGRSIGLAYEGKCIKAKSCDDIQCTGGKKCLWDFKVGRGRCSLCGELCPESKSEEPVCASDNATYASECAMKEAACSSGVLLEVKHSGSCNSISEDTEDEEEDEDQDYSFPISSILEW.

The signal sequence occupies residues 1–29; sequence MARPRHQPGGLCLLLLLLCQFMEDRSAQA. In terms of domain architecture, TB spans 30–103; the sequence is GNCWLRQAKN…TCENVDCGPG (74 aa). 8 cysteine pairs are disulfide-bonded: Cys32–Cys55, Cys42–Cys88, Cys56–Cys91, Cys95–Cys106, Cys100–Cys116, Cys118–Cys150, Cys122–Cys143, and Cys132–Cys164. In terms of domain architecture, Follistatin-like 1 spans 94–117; that stretch reads TCENVDCGPGKKCRMNKKNKPRCV. 3 consecutive Kazal-like domains span residues 112 to 166, 186 to 241, and 261 to 318; these read NKPR…KCKK, NAYC…KCIK, and KVGR…SCNS. Residue Asn124 is glycosylated (N-linked (GlcNAc...) asparagine). The region spanning 167–190 is the Follistatin-like 2 domain; that stretch reads TCRDVFCPGSSTCVVDQTNNAYCV. 3 cysteine pairs are disulfide-bonded: Cys192/Cys225, Cys196/Cys218, and Cys207/Cys239. The Follistatin-like 3 domain occupies 244-268; it reads SCDDIQCTGGKKCLWDFKVGRGRCS. 3 cysteine pairs are disulfide-bonded: Cys270/Cys302, Cys274/Cys295, and Cys284/Cys316. N-linked (GlcNAc...) asparagine glycosylation occurs at Asn288. The tract at residues 316–344 is disordered; that stretch reads CNSISEDTEDEEEDEDQDYSFPISSILEW. The span at 321–333 shows a compositional bias: acidic residues; it reads EDTEDEEEDEDQD.

Interacts with GDF11. Interacts with activin A/INHBA. Interacts with myostatin/MSTN.

The protein localises to the secreted. Its subcellular location is the nucleus. It localises to the nucleolus. In terms of biological role, multifunctional regulatory protein whose primary function is to antagonize members of the transforming growth factor beta (TGF-beta) superfamily including activin, myostatin, GDF11 or bone morphogenetic proteins (BMPs). Mechanistically, binds to these ligands in the extracellular space, blocking their type II receptor-binding site to inhibit downstream signaling. Plays an essential role in muscle fiber formation and growth both by preventing the repressive effects of myostatin and through SMAD3/AKT/mTOR signaling independently of myostatin. Also promotes neural differentiation by antagonizing the action BMP4. Acts as a specific inhibitor of the biosynthesis and secretion of pituitary follicle stimulating hormone (FSH) by sequestering activin A/INHBA. On the other hand, translocates into the nucleus where it down-regulates rRNA synthesis and ribosome biogenesis to maintain cellular energy homeostasis by binding to rDNA. This is Follistatin from Bos taurus (Bovine).